Here is a 64-residue protein sequence, read N- to C-terminus: MAAVCDICGKGPGFGKSVSHSHRRTSRRWDPNVQTVHMVTRPGGNKQQLKVCTSCIKAGKVTRG.

The protein belongs to the bacterial ribosomal protein bL28 family.

In Mycobacterium leprae (strain TN), this protein is Large ribosomal subunit protein bL28 (rpmB).